The following is an 86-amino-acid chain: Photosystem I reaction center subunit PsaK (86 aa).

Helical transmembrane passes span 14–34 (LQWSPTVGLIIIIANIIAIAF) and 57–77 (FGLPALLATTAFGHILGVGAV).

It belongs to the PsaG/PsaK family.

Its subcellular location is the cellular thylakoid membrane. The protein is Photosystem I reaction center subunit PsaK of Nostoc punctiforme (strain ATCC 29133 / PCC 73102).